We begin with the raw amino-acid sequence, 319 residues long: MAASRDFLGGFGGEVGGAAVAGEKGGGESDEIELSLGLSLGGCFGADLAREFKKPRLVRSSSIASICSLPGGGGGGAGGDDVATAAPAPAPLMRTSSLPTETEEERWRRREMQSLKRLEAKRKRLERRNSMNSGRSAGAGGGGRDDGQDAMYPTGFQLRRSVVSQGSTSSCMPEQGVGVGAEAMDTSSSDNASCQNKPLPPTASSGGGGGGRPPANGSMKEQPPLRTLRSLTMRTTSTGDLRKSMMEDMPMVSSRVDGPNGRKIDGFLYKYRKREEVRIVCVCHGNFLTPAEFVKHAGGGDVTNPLRHIVVNPSRSVFL.

3 disordered regions span residues 1–26 (MAAS…EKGG), 69–152 (LPGG…DAMY), and 181–234 (AEAM…LTMR). Residues 70–79 (PGGGGGGAGG) are compositionally biased toward gly residues. Residues 105-118 (ERWRRREMQSLKRL) are compositionally biased toward basic and acidic residues. Positions 185 to 196 (DTSSSDNASCQN) are enriched in polar residues. Residues 225–234 (LRTLRSLTMR) are compositionally biased toward low complexity.

This sequence belongs to the Ninja family.

The protein resides in the nucleus. The sequence is that of Ninja-family protein Os07g0602900 from Oryza sativa subsp. japonica (Rice).